A 69-amino-acid chain; its full sequence is Protein transport protein Sec61 subunit gamma-1 (69 aa).

M1 bears the N-acetylmethionine mark. Topologically, residues 1-32 are cytoplasmic; the sequence is MDAIDSVVDPLRDFAKDSIRLVKRCHKPDRKE. A helical membrane pass occupies residues 33 to 61; sequence FTKVAVRTAIGFVVMGFVGFFVKLIFIPI. At 62-69 the chain is on the extracellular side; sequence NNIIVGAT.

This sequence belongs to the SecE/SEC61-gamma family. In terms of assembly, heterotrimeric complex composed of SEC61-alpha, SEC61-beta and SEC61-gamma.

It localises to the endoplasmic reticulum membrane. Necessary for protein translocation in the endoplasmic reticulum. In Arabidopsis thaliana (Mouse-ear cress), this protein is Protein transport protein Sec61 subunit gamma-1 (SEC61G1).